The sequence spans 35 residues: Photosystem II reaction center protein T (35 aa).

Residues 3 to 23 (AFAYTLLMTLVVATLFFAVAF) traverse the membrane as a helical segment.

This sequence belongs to the PsbT family. PSII is composed of 1 copy each of membrane proteins PsbA, PsbB, PsbC, PsbD, PsbE, PsbF, PsbH, PsbI, PsbJ, PsbK, PsbL, PsbM, PsbT, PsbX, PsbY, Psb30/Ycf12, peripheral proteins PsbO, CyanoQ (PsbQ), PsbU, PsbV and a large number of cofactors. It forms dimeric complexes.

It is found in the cellular thylakoid membrane. Functionally, found at the monomer-monomer interface of the photosystem II (PS II) dimer, plays a role in assembly and dimerization of PSII. PSII is a light-driven water plastoquinone oxidoreductase, using light energy to abstract electrons from H(2)O, generating a proton gradient subsequently used for ATP formation. The protein is Photosystem II reaction center protein T of Prochlorococcus marinus (strain MIT 9303).